A 104-amino-acid polypeptide reads, in one-letter code: Integration host factor subunit beta (104 aa).

The protein belongs to the bacterial histone-like protein family. Heterodimer of an alpha and a beta chain.

Its function is as follows. This protein is one of the two subunits of integration host factor, a specific DNA-binding protein that functions in genetic recombination as well as in transcriptional and translational control. The polypeptide is Integration host factor subunit beta (Chromobacterium violaceum (strain ATCC 12472 / DSM 30191 / JCM 1249 / CCUG 213 / NBRC 12614 / NCIMB 9131 / NCTC 9757 / MK)).